Consider the following 862-residue polypeptide: Ubiquitin carboxyl-terminal hydrolase 13 (862 aa).

The UBP-type; degenerate zinc-finger motif lies at 182–290; it reads QASKHAKSLV…KHLAHFGIDM (109 aa). Cysteine 206, cysteine 209, cysteine 226, and histidine 239 together coordinate Zn(2+). In terms of domain architecture, USP spans 331-860; it reads TGMKNLGNSC…LGYIYFYHRI (530 aa). Cysteine 340 acts as the Nucleophile in catalysis. UBA domains follow at residues 647-688 and 722-762; these read DIDE…IIAH and QPPE…IFSH. Catalysis depends on histidine 822, which acts as the Proton acceptor.

The protein belongs to the peptidase C19 family.

It catalyses the reaction Thiol-dependent hydrolysis of ester, thioester, amide, peptide and isopeptide bonds formed by the C-terminal Gly of ubiquitin (a 76-residue protein attached to proteins as an intracellular targeting signal).. With respect to regulation, specifically inhibited by spautin-1 (specific and potent autophagy inhibitor-1), a derivative of MBCQ that binds to USP13 and inhibits deubiquitinase activity. In terms of biological role, deubiquitinase that mediates deubiquitination of target proteins and is involved in various processes such as autophagy and endoplasmic reticulum-associated degradation (ERAD). This chain is Ubiquitin carboxyl-terminal hydrolase 13 (USP13), found in Gallus gallus (Chicken).